The following is a 288-amino-acid chain: Small ribosomal subunit protein uS2 (288 aa).

Over residues 259–276 (EAAPAAEEAPAAEAEAAA) the composition is skewed to low complexity. Positions 259 to 288 (EAAPAAEEAPAAEAEAAATDTSSESDKTEA) are disordered.

This sequence belongs to the universal ribosomal protein uS2 family.

This is Small ribosomal subunit protein uS2 from Maricaulis maris (strain MCS10) (Caulobacter maris).